The chain runs to 229 residues: Small ribosomal subunit protein mS23 (229 aa).

This sequence belongs to the mitochondrion-specific ribosomal protein mS23 family. As to quaternary structure, component of the mitochondrial small ribosomal subunit.

Its subcellular location is the mitochondrion. This chain is Small ribosomal subunit protein mS23 (RSM25), found in Yarrowia lipolytica (strain CLIB 122 / E 150) (Yeast).